A 1374-amino-acid chain; its full sequence is Y' element ATP-dependent helicase YLL067C (1374 aa).

Residues 321 to 345 form a disordered region; sequence AGEAASSDHDQKISRVTRKRPREPK. The Helicase ATP-binding domain maps to 375 to 552; the sequence is EIYMADTPSV…LQRIGLTGLA (178 aa). 388–395 contributes to the ATP binding site; sequence APPGYGKT. A DEAH box motif is present at residues 498–501; that stretch reads DEFH. The region spanning 609 to 758 is the Helicase C-terminal domain; the sequence is KLLLALFEIE…EFYGLESKKG (150 aa). A compositionally biased stretch (low complexity) spans 832 to 1011; it reads ANASTNATTN…ATTTESTNAS (180 aa). The segment at 832 to 1035 is disordered; sequence ANASTNATTN…RFHPVTDINK (204 aa). Basic and acidic residues predominate over residues 1012-1035; sequence AKEDANKDGNAEDNRFHPVTDINK.

It belongs to the helicase family. Yeast subtelomeric Y' repeat subfamily.

Functionally, catalyzes DNA unwinding and is involved in telomerase-independent telomere maintenance. The polypeptide is Y' element ATP-dependent helicase YLL067C (Saccharomyces cerevisiae (strain ATCC 204508 / S288c) (Baker's yeast)).